The sequence spans 429 residues: UDP-N-acetylglucosamine 1-carboxyvinyltransferase (429 aa).

22-23 (KN) serves as a coordination point for phosphoenolpyruvate. R102 contacts UDP-N-acetyl-alpha-D-glucosamine. The active-site Proton donor is C126. C126 carries the post-translational modification 2-(S-cysteinyl)pyruvic acid O-phosphothioketal. UDP-N-acetyl-alpha-D-glucosamine-binding positions include 131–135 (RPVDL), D316, and I338.

This sequence belongs to the EPSP synthase family. MurA subfamily.

It is found in the cytoplasm. It carries out the reaction phosphoenolpyruvate + UDP-N-acetyl-alpha-D-glucosamine = UDP-N-acetyl-3-O-(1-carboxyvinyl)-alpha-D-glucosamine + phosphate. The protein operates within cell wall biogenesis; peptidoglycan biosynthesis. In terms of biological role, cell wall formation. Adds enolpyruvyl to UDP-N-acetylglucosamine. This chain is UDP-N-acetylglucosamine 1-carboxyvinyltransferase, found in Methylobacterium radiotolerans (strain ATCC 27329 / DSM 1819 / JCM 2831 / NBRC 15690 / NCIMB 10815 / 0-1).